The sequence spans 373 residues: Probable pectin lyase C (373 aa).

An N-terminal signal peptide occupies residues 1–17 (MKKYLLSLLAAVTYTTA). 2 disulfide bridges follow: cysteine 78–cysteine 95 and cysteine 87–cysteine 215. Residues asparagine 140 and asparagine 229 are each glycosylated (N-linked (GlcNAc...) asparagine). Residue arginine 245 is part of the active site. The cysteines at positions 315 and 323 are disulfide-linked.

The protein belongs to the polysaccharide lyase 1 family.

The protein localises to the secreted. It catalyses the reaction Eliminative cleavage of (1-&gt;4)-alpha-D-galacturonan methyl ester to give oligosaccharides with 4-deoxy-6-O-methyl-alpha-D-galact-4-enuronosyl groups at their non-reducing ends.. Functionally, pectinolytic enzymes consist of four classes of enzymes: pectin lyase, polygalacturonase, pectin methylesterase and rhamnogalacturonase. Among pectinolytic enzymes, pectin lyase is the most important in depolymerization of pectin, since it cleaves internal glycosidic bonds of highly methylated pectins. The polypeptide is Probable pectin lyase C (pelC) (Emericella nidulans (strain FGSC A4 / ATCC 38163 / CBS 112.46 / NRRL 194 / M139) (Aspergillus nidulans)).